We begin with the raw amino-acid sequence, 520 residues long: UBX domain-containing protein 11 (520 aa).

The disordered stretch occupies residues 1–26; that stretch reads MSSPLASLSKTRKVPLPSEPMNPGRR. Residues 76–149 are a coiled coil; sequence MAFMTRKLWD…VREMERFLSD (74 aa). An SEP domain is found at 230 to 294; the sequence is LEPIPLKLYR…VSDLRNQVYL (65 aa). The UBX domain occupies 392–469; it reads PAPPLSMLRI…GLVPKAALLL (78 aa). Residues 476–520 are disordered; the sequence is KSSLKFSPGPCPGPGPGPSPGPGPGPSPGPGPGPSPCPGPSPSPQ. Pro residues predominate over residues 484-520; that stretch reads GPCPGPGPGPSPGPGPGPSPGPGPGPSPCPGPSPSPQ. 3 repeat units span residues 487–494, 495–502, and 503–510. The segment at 487–510 is 3 X 8 AA tandem repeats of P-G-P-G-P-G-P-S; it reads PGPGPGPSPGPGPGPSPGPGPGPS.

In terms of assembly, interacts with GNA12, GNA13, RND1, RND2 and RND3.

It is found in the cytoplasm. It localises to the cytoskeleton. Functionally, may be involved in the reorganization of actin cytoskeleton mediated by RND1, RND2 and RND3. Promotes RHOA activation mediated by GNA12 and GNA13. In Homo sapiens (Human), this protein is UBX domain-containing protein 11 (UBXN11).